The following is a 391-amino-acid chain: Phosphoglycerate kinase (391 aa).

Substrate-binding positions include 21–23, arginine 36, 59–62, arginine 113, and arginine 146; these read DLN and HLGR. Residues lysine 197, glutamate 319, and 345-348 each bind ATP; that span reads GGDT.

It belongs to the phosphoglycerate kinase family. Monomer.

The protein localises to the cytoplasm. The catalysed reaction is (2R)-3-phosphoglycerate + ATP = (2R)-3-phospho-glyceroyl phosphate + ADP. The protein operates within carbohydrate degradation; glycolysis; pyruvate from D-glyceraldehyde 3-phosphate: step 2/5. This is Phosphoglycerate kinase from Shewanella sediminis (strain HAW-EB3).